The sequence spans 178 residues: NADH-quinone oxidoreductase subunit I 2 (178 aa).

4Fe-4S ferredoxin-type domains follow at residues 46-78 (IVLTRDPDGGERCVACYLCSAVCPVSCISMQAA) and 88-117 (AWFRINFARCIYCGLCEEACPTSAIQLTPF). Cysteine 58, cysteine 61, cysteine 64, cysteine 68, cysteine 97, cysteine 100, cysteine 103, and cysteine 107 together coordinate [4Fe-4S] cluster.

This sequence belongs to the complex I 23 kDa subunit family. In terms of assembly, NDH-1 is composed of 14 different subunits. Subunits NuoA, H, J, K, L, M, N constitute the membrane sector of the complex. [4Fe-4S] cluster is required as a cofactor.

The protein localises to the cell inner membrane. It carries out the reaction a quinone + NADH + 5 H(+)(in) = a quinol + NAD(+) + 4 H(+)(out). Its function is as follows. NDH-1 shuttles electrons from NADH, via FMN and iron-sulfur (Fe-S) centers, to quinones in the respiratory chain. The immediate electron acceptor for the enzyme in this species is believed to be ubiquinone. Couples the redox reaction to proton translocation (for every two electrons transferred, four hydrogen ions are translocated across the cytoplasmic membrane), and thus conserves the redox energy in a proton gradient. The chain is NADH-quinone oxidoreductase subunit I 2 from Syntrophobacter fumaroxidans (strain DSM 10017 / MPOB).